A 154-amino-acid chain; its full sequence is Endoribonuclease YbeY (154 aa).

Residues His118, His122, and His128 each coordinate Zn(2+).

This sequence belongs to the endoribonuclease YbeY family. It depends on Zn(2+) as a cofactor.

The protein localises to the cytoplasm. Functionally, single strand-specific metallo-endoribonuclease involved in late-stage 70S ribosome quality control and in maturation of the 3' terminus of the 16S rRNA. The sequence is that of Endoribonuclease YbeY from Chloroflexus aurantiacus (strain ATCC 29366 / DSM 635 / J-10-fl).